The sequence spans 109 residues: Prothymosin alpha (109 aa).

The tract at residues 1–109 (MSDTSVDASV…AKKQKTDDDD (109 aa)) is disordered. Basic and acidic residues predominate over residues 9–35 (SVEKTTKDLKSKDKELVEETENGKDKP). The segment covering 41–81 (ENEENGEDGADNEEEEEVDEEDEEDEGEGDDDEGDEDDEAD) has biased composition (acidic residues). A compositionally biased stretch (basic and acidic residues) spans 99–109 (DAKKQKTDDDD).

It belongs to the pro/parathymosin family. In terms of tissue distribution, highly expressed in the testis.

The protein localises to the nucleus. In terms of biological role, may have role in testicular activity. In Pelophylax lessonae (Pool frog), this protein is Prothymosin alpha.